We begin with the raw amino-acid sequence, 596 residues long: MVDIAEAMPTTASSLPSDEALRKFKCPECTKAFKFKHHLKEHIRIHSGEKPFECQQCHKRFSHSGSYSSHMSSKKCVQQASPSMVTPFNPYQLMMYRNIMLQLQTPQVSFLPSTAANNMDYMSLLQANLFQSLENGTSPTPTQEPSAPASPEPKIEVVDEPEVSSEVKTEVKTEVKTEDSVPEESITPAVSMSLSPAPEQNGNESMNNGGSGSDGKSSPDWRPLRSRSFLNDSQVAVLQNHFKRNPFPSKYELSAVAEQIGVNKRVVQVWFQNTRAKERRSNRLPSMPRGSVASAAAAAATSPTVWQTPVQLMAAWASQFSNGNNSLTASQDERNNENTDEVMDHDGLKDGKETPLDLTLSTDDTEPEWSPEKLIGFLDQTGGVIQELLRQAGNGFVTNQEDEEEKPIKAEESPVSSGSSSIWPSFIGQYPSILDSASLSVLEKALDQQKSSEDDASSLCSNESKLLKFPTTPLKEEEGLFSCDQCDKVFGKQSSLARHKYEHSGQRPYKCDICEKAFKHKHHLTEHKRLHSGEKPFQCDKCLKRFSHSGSYSQHMNHRYSYCKPYREQPASPSDVLNGGSVTVSPSSSNTPPPST.

The segment at 24 to 46 adopts a C2H2-type 1 zinc-finger fold; it reads FKCPECTKAFKFKHHLKEHIRIH. A C2H2-type 2; degenerate zinc finger spans residues 52-72; that stretch reads FECQQCHKRFSHSGSYSSHMS. The segment covering 133–145 has biased composition (polar residues); the sequence is LENGTSPTPTQEP. 3 disordered regions span residues 133 to 225, 324 to 369, and 395 to 421; these read LENG…RPLR, NNSL…EPEW, and GFVT…GSSS. A compositionally biased stretch (basic and acidic residues) spans 165–179; that stretch reads SEVKTEVKTEVKTED. Residues 188-200 are compositionally biased toward polar residues; sequence PAVSMSLSPAPEQ. Low complexity predominate over residues 201–216; that stretch reads NGNESMNNGGSGSDGK. A DNA-binding region (homeobox) is located at residues 223–282; sequence PLRSRSFLNDSQVAVLQNHFKRNPFPSKYELSAVAEQIGVNKRVVQVWFQNTRAKERRSN. Over residues 331 to 355 the composition is skewed to basic and acidic residues; that stretch reads QDERNNENTDEVMDHDGLKDGKETP. C2H2-type zinc fingers lie at residues 481–503 and 509–531; these read FSCD…KYEH and YKCD…KRLH. Residues 537–560 form a C2H2-type 5; degenerate zinc finger; the sequence is FQCDKCLKRFSHSGSYSQHMNHRY. The disordered stretch occupies residues 569–596; the sequence is QPASPSDVLNGGSVTVSPSSSNTPPPST. Low complexity predominate over residues 578-590; that stretch reads NGGSVTVSPSSSN.

Expressed in the six touch receptor neurons (TRNs) but not in the FLP and PVD neurons. Expressed in the M4 cholinergic motor neuron.

Its subcellular location is the nucleus. Functionally, transcription factor. Down-regulates expression of genes involved in either the synthesis or reuptake of serotonin, dopamine and GABA. Acts as a transcriptional repressor to regulate multiple, discrete, neuron-specific aspects of terminal differentiation, including cell migration, axonal development and gene expression. Promotes touch receptor neuron differentiation by repressing the expression of egl-44 and egl-46. As egl-44 and egl-46, probably acting as a heterodimer, repress expression of zag-1 in FLP neurons, together these proteins form a bistable, negative-feedback loop that regulates the choice between neuronal fates. Required for axon guidance. Involved in the proper development of the pharynx. Required for pharynx isthmus peristalsis, probably via a role in the differentiation of the M4 cholinergic motor neuron. Directly represses its own transcription by interacting with conserved E-box sequence motifs 5'-CACCTG-3' in its own promoter. May also act as a transcriptional activator of the homeodomain ceh-28. The protein is Zinc finger E-box-binding homeobox protein zag-1 of Caenorhabditis elegans.